Here is a 1174-residue protein sequence, read N- to C-terminus: Probable pyruvate-flavodoxin oxidoreductase (1174 aa).

4Fe-4S ferredoxin-type domains lie at 680 to 709 (EIPI…AKVV) and 736 to 765 (YVLQ…NPEI). 12 residues coordinate [4Fe-4S] cluster: cysteine 689, cysteine 692, cysteine 695, cysteine 699, cysteine 745, cysteine 748, cysteine 751, cysteine 755, cysteine 819, cysteine 822, cysteine 847, and cysteine 1071.

The protein belongs to the pyruvate:ferredoxin/flavodoxin oxidoreductase family. It depends on [4Fe-4S] cluster as a cofactor.

The catalysed reaction is oxidized [flavodoxin] + pyruvate + CoA + 2 H(+) = reduced [flavodoxin] + acetyl-CoA + CO2. Its function is as follows. Oxidoreductase required for the transfer of electrons from pyruvate to flavodoxin. The chain is Probable pyruvate-flavodoxin oxidoreductase (ydbK) from Escherichia coli (strain K12).